A 763-amino-acid chain; its full sequence is Translation initiation factor IF-2 (763 aa).

A disordered region spans residues 52–178 (KQKKVQTSQN…KDEAIKHETK (127 aa)). Over residues 65–82 (SNDENKKITNKNTEKTTE) the composition is skewed to basic and acidic residues. Residues 86-96 (TVDSNKQNNSN) are compositionally biased toward polar residues. 2 stretches are compositionally biased toward basic and acidic residues: residues 105 to 116 (RNNDEESVSHFD) and 123 to 135 (KSEMNEKRDLNDK). The segment covering 136–145 (KKNKNFKNTK) has biased composition (basic residues). Positions 146–161 (NKNSNNNKNSKNNKNN) are enriched in low complexity. Basic and acidic residues predominate over residues 162 to 178 (KNNDHNRKDEAIKHETK). The tr-type G domain maps to 265 to 434 (ERPPVITVMG…LMVAEMEELK (170 aa)). Positions 274–281 (GHVDHGKT) are G1. 274-281 (GHVDHGKT) provides a ligand contact to GTP. The interval 299 to 303 (GITQH) is G2. The segment at 320 to 323 (DTPG) is G3. GTP-binding positions include 320–324 (DTPGH) and 374–377 (NKID). The segment at 374-377 (NKID) is G4. The G5 stretch occupies residues 410 to 412 (SAR).

Belongs to the TRAFAC class translation factor GTPase superfamily. Classic translation factor GTPase family. IF-2 subfamily.

It localises to the cytoplasm. Functionally, one of the essential components for the initiation of protein synthesis. Protects formylmethionyl-tRNA from spontaneous hydrolysis and promotes its binding to the 30S ribosomal subunits. Also involved in the hydrolysis of GTP during the formation of the 70S ribosomal complex. The protein is Translation initiation factor IF-2 of Finegoldia magna (strain ATCC 29328 / DSM 20472 / WAL 2508) (Peptostreptococcus magnus).